Reading from the N-terminus, the 160-residue chain is Ureidoglycolate lyase (160 aa).

It belongs to the ureidoglycolate lyase family. As to quaternary structure, homodimer. The cofactor is Ni(2+).

The catalysed reaction is (S)-ureidoglycolate = urea + glyoxylate. The protein operates within nitrogen metabolism; (S)-allantoin degradation. Functionally, catalyzes the catabolism of the allantoin degradation intermediate (S)-ureidoglycolate, generating urea and glyoxylate. Involved in the anaerobic utilization of allantoin as sole nitrogen source. Reinforces the induction of genes involved in the degradation of allantoin and glyoxylate by producing glyoxylate. This Escherichia coli (strain K12 / MC4100 / BW2952) protein is Ureidoglycolate lyase.